Reading from the N-terminus, the 564-residue chain is Proline--tRNA ligase (564 aa).

Belongs to the class-II aminoacyl-tRNA synthetase family. ProS type 1 subfamily. As to quaternary structure, homodimer.

It is found in the cytoplasm. It catalyses the reaction tRNA(Pro) + L-proline + ATP = L-prolyl-tRNA(Pro) + AMP + diphosphate. Catalyzes the attachment of proline to tRNA(Pro) in a two-step reaction: proline is first activated by ATP to form Pro-AMP and then transferred to the acceptor end of tRNA(Pro). As ProRS can inadvertently accommodate and process non-cognate amino acids such as alanine and cysteine, to avoid such errors it has two additional distinct editing activities against alanine. One activity is designated as 'pretransfer' editing and involves the tRNA(Pro)-independent hydrolysis of activated Ala-AMP. The other activity is designated 'posttransfer' editing and involves deacylation of mischarged Ala-tRNA(Pro). The misacylated Cys-tRNA(Pro) is not edited by ProRS. The sequence is that of Proline--tRNA ligase from Coxiella burnetii (strain RSA 331 / Henzerling II).